The chain runs to 78 residues: Putative Fe(2+) transport protein A (78 aa).

This sequence belongs to the FeoA family.

Its function is as follows. Might be involved in Fe(2+) ion uptake. The polypeptide is Putative Fe(2+) transport protein A (Helicobacter pylori (strain J99 / ATCC 700824) (Campylobacter pylori J99)).